Here is a 666-residue protein sequence, read N- to C-terminus: DNA mismatch repair protein MutL (666 aa).

This sequence belongs to the DNA mismatch repair MutL/HexB family.

Functionally, this protein is involved in the repair of mismatches in DNA. It is required for dam-dependent methyl-directed DNA mismatch repair. May act as a 'molecular matchmaker', a protein that promotes the formation of a stable complex between two or more DNA-binding proteins in an ATP-dependent manner without itself being part of a final effector complex. The polypeptide is DNA mismatch repair protein MutL (Clostridium botulinum (strain ATCC 19397 / Type A)).